Consider the following 435-residue polypeptide: Tungsten-containing formylmethanofuran dehydrogenase 2 subunit B (435 aa).

A non-standard amino acid (selenocysteine) is located at residue Sec-121.

This sequence belongs to the FwdB family. This enzyme is composed of six subunits FwdA, FwdC, FwdD, FwdE, FwdF and FwdG. It depends on W-bis(molybdopterin guanine dinucleotide) as a cofactor.

The catalysed reaction is N-formylmethanofuran + 2 oxidized [2Fe-2S]-[ferredoxin] + H2O = methanofuran + 2 reduced [2Fe-2S]-[ferredoxin] + CO2 + H(+). It participates in one-carbon metabolism; methanogenesis from CO(2); 5,10-methenyl-5,6,7,8-tetrahydromethanopterin from CO(2): step 1/3. Its function is as follows. Catalyzes the reversible oxidation of CO(2) and methanofuran (MFR) to N-formylmethanofuran (CHO-MFR). This enzyme is oxygen-labile. The polypeptide is Tungsten-containing formylmethanofuran dehydrogenase 2 subunit B (fwdB) (Methanocaldococcus jannaschii (strain ATCC 43067 / DSM 2661 / JAL-1 / JCM 10045 / NBRC 100440) (Methanococcus jannaschii)).